Here is a 377-residue protein sequence, read N- to C-terminus: Glycine oxidase (377 aa).

Residues 14-15 (VI), 34-35 (EK), 42-43 (AS), 47-49 (AGM), and Val180 contribute to the FAD site. Substrate contacts are provided by Arg309 and Arg336. 334–340 (HYRNGIL) provides a ligand contact to FAD.

Belongs to the DAO family. ThiO subfamily. Homotetramer. The cofactor is FAD.

The catalysed reaction is glycine + O2 + H2O = glyoxylate + H2O2 + NH4(+). The enzyme catalyses N-ethylglycine + O2 + H2O = ethylamine + glyoxylate + H2O2. It catalyses the reaction sarcosine + O2 + H2O = methylamine + glyoxylate + H2O2. It carries out the reaction D-alanine + O2 + H2O = pyruvate + H2O2 + NH4(+). Its pathway is cofactor biosynthesis; thiamine diphosphate biosynthesis. With respect to regulation, is inhibited at high substrate concentration. Catalyzes the FAD-dependent oxidative deamination of various amines and D-amino acids to yield the corresponding alpha-keto acids, ammonia/amine, and hydrogen peroxide. Oxidizes glycine, sarcosine (N-methylglycine), N-ethylglycine, D-proline, D-alanine, glycine-ethyl ester, and some other D-amino acids. Does not act on L-proline. Is essential for thiamine biosynthesis since the oxidation of glycine catalyzed by ThiO generates the glycine imine intermediate (dehydroglycine) required for the biosynthesis of the thiazole ring of thiamine pyrophosphate. The polypeptide is Glycine oxidase (Geobacillus kaustophilus (strain HTA426)).